The primary structure comprises 2971 residues: Reticulocyte-binding protein homolog 1 (2971 aa).

An N-terminal signal peptide occupies residues 1-20 (MQRWIFCNIVLHILIYLAEF). The Extracellular portion of the chain corresponds to 21–2897 (SHEQESYSSN…KKQKNGNHER (2877 aa)). The interval 30-50 (NEKIRKDYSDDNNYEPTPSYE) is disordered. N70, N78, N87, N135, N286, N384, and N417 each carry an N-linked (GlcNAc...) asparagine glycan. The tract at residues 500–833 (LQIVQQKLLE…MQQGYNNLTN (334 aa)) is erythrocyte binding domain (EBD). LRR repeat units lie at residues 528 to 553 (YKNI…NIKD) and 607 to 633 (LNNL…ILQK). The N-linked (GlcNAc...) asparagine glycan is linked to N685. LRR repeat units lie at residues 736 to 758 (IDTI…VYTD) and 785 to 808 (QETL…LLKE). N-linked (GlcNAc...) asparagine glycans are attached at residues N830, N892, N1000, and N1010. LRR repeat units follow at residues 993–1018 (LKIL…TLND) and 1356–1381 (LRNI…AHKE). N1425 carries an N-linked (GlcNAc...) asparagine glycan. Residues 1466–1489 (AKYMENIDTYKNNIEIISKQINPE) form an LRR 7 repeat. N1496 carries N-linked (GlcNAc...) asparagine glycosylation. LRR repeat units follow at residues 1512-1537 (YKQI…ELQN), 1586-1609 (SQNI…LEEE), and 1611-1636 (EQMK…AFIN). Residues N1664, N1692, N1718, N1816, and N1844 are each glycosylated (N-linked (GlcNAc...) asparagine). LRR repeat units lie at residues 1700–1723 (LQEL…TIKY) and 1809–1834 (LKLF…SIQN). The LRR 13 repeat unit spans residues 1880 to 1903 (QNEIRNMNLEKNFMLDKSKKIDEE). Residues N1913 and N1918 are each glycosylated (N-linked (GlcNAc...) asparagine). The stretch at 1944 to 1967 (KENIEKIKQEINTLSDVFKKPFFF) is one LRR 14 repeat. 6 N-linked (GlcNAc...) asparagine glycosylation sites follow: N2054, N2207, N2289, N2300, N2338, and N2405. An LRR 15 repeat occupies 2523 to 2548 (IKDIDNVFIKIQNNKFEQIQKYIEII). N-linked (GlcNAc...) asparagine glycans are attached at residues N2598 and N2752. The LRR 16 repeat unit spans residues 2731–2754 (ENIFDNIQLKKKDIDDIIININNT). 2 stretches are compositionally biased toward basic and acidic residues: residues 2773–2782 (KVDEKSEINN) and 2795–2804 (QKNKIKDHNL). Disordered stretches follow at residues 2773–2825 (KVDE…MKEQ) and 2840–2862 (HHVH…LQEQ). N2811 carries N-linked (GlcNAc...) asparagine glycosylation. Residues 2814–2825 (EESHQNEQMKEQ) are compositionally biased toward basic and acidic residues. A helical membrane pass occupies residues 2898–2918 (MYFASGIVVSILFLSSLGFVI). At 2919–2971 (NSKNNKQEYDKEQEKQQQNDFVCDNNKMDDKSTQKYGRNQEEVMEISFDNDYI) the chain is on the cytoplasmic side.

May in part interact with AMA1 in the moving tight junction between the parasite and the erythrocyte membranes; the interaction may facilitate junction formation and active invasion. Post-translationally, proteolytically processed into multiple fragments following schizont rupture. In the mature schizont stage prior to merozoite release, full length RH1 is processed post-Golgi into a 240 kDa N-terminal form and a 120 kDa C-terminal form containing the transmembrane region. Both forms appear not to form a complex. However, they appear to remain in close proximity in late schizonts. Following merozoite invasion of host erythrocytes, the 240 kDa form is further processed into a 140 kDa form which may be involved in the disengagement of the ligand-receptor complex required during the invasion process. Also, the 120 kDa is further cleaved into a 110 kDa form and a transmembrane 9 kDa form probably by ROM4.

The protein resides in the cell membrane. Its subcellular location is the secreted. The protein localises to the cell junction. It localises to the tight junction. It is found in the cytoplasmic vesicle. The protein resides in the secretory vesicle. Its subcellular location is the rhoptry. During the asexual blood stage, binds to a sialic acid containing receptor on the surface of the host erythrocyte and thus is involved in merozoite invasion. Binds erythrocytes via a neuraminidase sensitive and trypsin-, chymotrypsin-resistant receptor. After merozoite attachment and reorientation, RH1 binding to its erythrocyte receptor triggers an increase in intracellular Ca(2+) within the parasite resulting in the release of microneme proteins such as EBA175 which in turn leads to the formation of the tight junction between parasite and host cell. The polypeptide is Reticulocyte-binding protein homolog 1 (Plasmodium falciparum (isolate 3D7)).